The sequence spans 213 residues: Cytochrome b-c1 complex subunit Rieske, mitochondrial (213 aa).

The N-terminal 29 residues, 1-29, are a transit peptide targeting the mitochondrion; it reads MSSLAFRTLRNGLGLKSSVRALSTTTTTL. The Mitochondrial matrix segment spans residues 30–47; the sequence is SNYQQPDYSSYLNNKSGQ. The helical transmembrane segment at 48-77 threads the bilayer; the sequence is GSRNFTYFMVGSMGLLSAAGAKSTVEAFLS. Residues 78–213 are Mitochondrial intermembrane-facing; that stretch reads SFAASADVLA…FTDDETLLVG (136 aa). The region spanning 116-211 is the Rieske domain; that stretch reads RHRTADEIEE…YDFTDDETLL (96 aa). Residues Cys156, His158, Cys175, and His178 each coordinate [2Fe-2S] cluster. A disulfide bond links Cys161 and Cys177.

The protein belongs to the Rieske iron-sulfur protein family. Component of the ubiquinol-cytochrome c oxidoreductase (cytochrome b-c1 complex, complex III, CIII), a multisubunit enzyme composed of 10 subunits. The complex is composed of 3 respiratory subunits cytochrome b (COB), cytochrome c1 (CYT1) and Rieske protein (RIP1), 2 core protein subunits COR1 and QCR2, and 5 low-molecular weight protein subunits QCR6, QCR7, QCR8, QCR9 and QCR10. The complex exists as an obligatory dimer and forms supercomplexes (SCs) in the inner mitochondrial membrane with a monomer or a dimer of cytochrome c oxidase (complex IV, CIV), resulting in 2 different assemblies (supercomplexes III(2)IV and III(2)IV(2)). [2Fe-2S] cluster is required as a cofactor.

It localises to the mitochondrion inner membrane. It carries out the reaction a quinol + 2 Fe(III)-[cytochrome c](out) = a quinone + 2 Fe(II)-[cytochrome c](out) + 2 H(+)(out). In terms of biological role, component of the ubiquinol-cytochrome c oxidoreductase, a multisubunit transmembrane complex that is part of the mitochondrial electron transport chain which drives oxidative phosphorylation. The complex plays an important role in the uptake of multiple carbon sources present in different host niches. This Candida albicans (strain SC5314 / ATCC MYA-2876) (Yeast) protein is Cytochrome b-c1 complex subunit Rieske, mitochondrial.